The sequence spans 309 residues: tRNA uridine(34) hydroxylase (309 aa).

Positions 129–223 (SEPGTIVIDT…YLEEVPAEQS (95 aa)) constitute a Rhodanese domain. The active-site Cysteine persulfide intermediate is the C183. Positions 288 to 309 (YAERQRQVELAQARGKRPHIGS) are disordered.

Belongs to the TrhO family.

It carries out the reaction uridine(34) in tRNA + AH2 + O2 = 5-hydroxyuridine(34) in tRNA + A + H2O. In terms of biological role, catalyzes oxygen-dependent 5-hydroxyuridine (ho5U) modification at position 34 in tRNAs. The sequence is that of tRNA uridine(34) hydroxylase from Mesorhizobium japonicum (strain LMG 29417 / CECT 9101 / MAFF 303099) (Mesorhizobium loti (strain MAFF 303099)).